The chain runs to 170 residues: Large ribosomal subunit protein uL10 (170 aa).

The protein belongs to the universal ribosomal protein uL10 family. Part of the ribosomal stalk of the 50S ribosomal subunit. The N-terminus interacts with L11 and the large rRNA to form the base of the stalk. The C-terminus forms an elongated spine to which L12 dimers bind in a sequential fashion forming a multimeric L10(L12)X complex.

Functionally, forms part of the ribosomal stalk, playing a central role in the interaction of the ribosome with GTP-bound translation factors. The chain is Large ribosomal subunit protein uL10 from Jannaschia sp. (strain CCS1).